The sequence spans 354 residues: UDP-N-acetylglucosamine--N-acetylmuramyl-(pentapeptide) pyrophosphoryl-undecaprenol N-acetylglucosamine transferase 1 (354 aa).

Residues 12–14 (TAG), Arg-163, Ser-193, and Gln-287 contribute to the UDP-N-acetyl-alpha-D-glucosamine site.

The protein belongs to the glycosyltransferase 28 family. MurG subfamily.

It is found in the cell membrane. It carries out the reaction di-trans,octa-cis-undecaprenyl diphospho-N-acetyl-alpha-D-muramoyl-L-alanyl-D-glutamyl-meso-2,6-diaminopimeloyl-D-alanyl-D-alanine + UDP-N-acetyl-alpha-D-glucosamine = di-trans,octa-cis-undecaprenyl diphospho-[N-acetyl-alpha-D-glucosaminyl-(1-&gt;4)]-N-acetyl-alpha-D-muramoyl-L-alanyl-D-glutamyl-meso-2,6-diaminopimeloyl-D-alanyl-D-alanine + UDP + H(+). Its pathway is cell wall biogenesis; peptidoglycan biosynthesis. Cell wall formation. Catalyzes the transfer of a GlcNAc subunit on undecaprenyl-pyrophosphoryl-MurNAc-pentapeptide (lipid intermediate I) to form undecaprenyl-pyrophosphoryl-MurNAc-(pentapeptide)GlcNAc (lipid intermediate II). The polypeptide is UDP-N-acetylglucosamine--N-acetylmuramyl-(pentapeptide) pyrophosphoryl-undecaprenol N-acetylglucosamine transferase 1 (Bacillus thuringiensis (strain Al Hakam)).